A 561-amino-acid polypeptide reads, in one-letter code: Potassium-transporting ATPase potassium-binding subunit (561 aa).

Helical transmembrane passes span 2–22 (GQGLLQIGLTLCIVIAITPVL), 66–86 (IRAILYTNLFMGILVYSLIYF), 135–155 (ALGFLMFTSAATGLAVGIAFI), 177–197 (ILLPISVIGAIALVLLGVPQT), 253–273 (LIETIAMIAIPAAMIYTYGVF), 280–300 (AWLLFWMVFIVFVILVWVAAG), 327–347 (FGWAETALWAVMTTATMCGAV), 354–374 (LMPQGLFATLFNLFLQIIWGG), 378–398 (GTAYLFIYLILTVFLTGLMVG), 413–433 (IVLASLILLIHPIVVLIPSAI), 482–502 (LSTSLSILTGRYVPIIAMLLL), and 531–551 (AGIVLILGVLTFFPVLALGPI).

Belongs to the KdpA family. In terms of assembly, the system is composed of three essential subunits: KdpA, KdpB and KdpC.

The protein localises to the cell inner membrane. In terms of biological role, part of the high-affinity ATP-driven potassium transport (or Kdp) system, which catalyzes the hydrolysis of ATP coupled with the electrogenic transport of potassium into the cytoplasm. This subunit binds the periplasmic potassium ions and delivers the ions to the membrane domain of KdpB through an intramembrane tunnel. The polypeptide is Potassium-transporting ATPase potassium-binding subunit (Nostoc sp. (strain PCC 7120 / SAG 25.82 / UTEX 2576)).